We begin with the raw amino-acid sequence, 348 residues long: D-fructose 1,6-bisphosphatase class 2/sedoheptulose 1,7-bisphosphatase 2 (348 aa).

4 residues coordinate Mn(2+): D33, E57, D97, and E100. Substrate is bound by residues 100-102 (EGT), Y131, 176-178 (RER), and 198-200 (DGD). E225 is a Mn(2+) binding site.

Belongs to the FBPase class 2 family. Homotetramer.

It catalyses the reaction beta-D-fructose 1,6-bisphosphate + H2O = beta-D-fructose 6-phosphate + phosphate. The enzyme catalyses D-sedoheptulose 1,7-bisphosphate + H2O = D-sedoheptulose 7-phosphate + phosphate. It functions in the pathway carbohydrate biosynthesis; Calvin cycle. In terms of biological role, catalyzes the hydrolysis of fructose 1,6-bisphosphate (Fru 1,6-P2) and sedoheptulose 1,7-bisphosphate (Sed 1,7-P2) to fructose 6-phosphate and sedoheptulose 7-phosphate, respectively. This is D-fructose 1,6-bisphosphatase class 2/sedoheptulose 1,7-bisphosphatase 2 from Acaryochloris marina (strain MBIC 11017).